Here is a 24-residue protein sequence, read N- to C-terminus: Ascaphin-5 (24 aa).

Expressed by the skin glands.

It localises to the secreted. Functionally, antimicrobial peptide. Synthetic peptide shows higher potency against Gram-negative bacteria than against Gram-positive bacteria. Has a very week hemolytic activity. The protein is Ascaphin-5 of Ascaphus truei (Coastal tailed frog).